Consider the following 508-residue polypeptide: Ribose import ATP-binding protein RbsA 2 (508 aa).

ABC transporter domains are found at residues 6–241 (LTIH…VGRE) and 254–499 (ERSG…SGMG). 38 to 45 (GENGAGKS) contributes to the ATP binding site.

Belongs to the ABC transporter superfamily. Ribose importer (TC 3.A.1.2.1) family. The complex is composed of an ATP-binding protein (RbsA), two transmembrane proteins (RbsC) and a solute-binding protein (RbsB).

The protein resides in the cell inner membrane. It catalyses the reaction D-ribose(out) + ATP + H2O = D-ribose(in) + ADP + phosphate + H(+). In terms of biological role, part of the ABC transporter complex RbsABC involved in ribose import. Responsible for energy coupling to the transport system. The polypeptide is Ribose import ATP-binding protein RbsA 2 (Rhizobium etli (strain ATCC 51251 / DSM 11541 / JCM 21823 / NBRC 15573 / CFN 42)).